The chain runs to 430 residues: Sorting nexin-30 (430 aa).

Over residues 1–18 (MSNGGTPRSLPSSGQKSI) the composition is skewed to polar residues. The tract at residues 1–66 (MSNGGTPRSL…SSPASSSSLL (66 aa)) is disordered. The span at 57 to 66 (SSPASSSSLL) shows a compositional bias: low complexity. Residues 80–201 (RDLFVTVDDP…AFLSAKDLNK (122 aa)) form the PX domain. The a 1,2-diacyl-sn-glycero-3-phospho-(1D-myo-inositol-3-phosphate) site is built by R123, Q125, K153, and R167. Residues 223 to 428 (KLRGRPVEFA…LQDKQDAKGE (206 aa)) enclose the BAR domain.

It belongs to the sorting nexin family.

The protein localises to the early endosome membrane. Functionally, involved in the regulation of endocytosis and in several stages of intracellular trafficking. Together with snx4, involved in autophagosome assembly. The sequence is that of Sorting nexin-30 (snx30) from Danio rerio (Zebrafish).